Consider the following 549-residue polypeptide: MAESTAHTSPSLNDKEREVDQGILSDESGPAEEVKETPDQERSVQGVRWLLICIAVFSANLLYGLDNTIVADIQGAVAGTFEEYAQLGWLGVGFTLGSVVFILPLGKAYAIFDTKWLFIGCLTMFAAGSALCGGAPNMDAIIVGRVWAGAGGAGMYLGNLNLITILTTPKEQPVYVGLVGLIYGVGCILGPIIGGAFADSSATWRWGFYINLIIFGIMAPIYVFLLPSLPRPAGEGRSFINRLRELDWVGTVLSAGMHVSFILFIVFGGVMWPWTDGRNIALYVVAAVTLIAFALSQYFCVLTDKENRLFPGEFLRNPTMIALYVLMACGGAALFVAVYYIPLYFQFVHGDSGIMSAVRLLPFICFYVATILLCGWLMPKTGYYVLWYLLSGIFMVIGSATMYTVKYDTKVANIYGYSILLGLGMATTQAAYAVGPSLVTPDRVAESIQFMNIGQGQSQLLGLAIASAIFQSETLSGLNALLAGKGYSQGDIQGAIAGARSTLLTELPADLKTKALDVIVHSIDDVYVMAIAAGALYVIASCFLPWRRF.

Polar residues predominate over residues 1–12 (MAESTAHTSPSL). The disordered stretch occupies residues 1–40 (MAESTAHTSPSLNDKEREVDQGILSDESGPAEEVKETPDQ). 14 helical membrane passes run 50-70 (LLIC…NTIV), 85-105 (AQLG…ILPL), 116-136 (WLFI…GGAP), 146-166 (VWAG…ITIL), 178-198 (LVGL…GAFA), 206-226 (WGFY…VFLL), 252-272 (VLSA…GVMW), 282-302 (LYVV…FCVL), 321-341 (IALY…VYYI), 360-380 (LLPF…LMPK), 385-405 (VLWY…MYTV), 419-439 (ILLG…PSLV), 460-482 (LLGL…NALL), and 526-546 (VYVM…FLPW).

The protein belongs to the major facilitator superfamily. TCR/Tet family.

It localises to the vacuole membrane. The protein localises to the cell membrane. Its function is as follows. Efflux pump; part of the gene cluster that mediates the biosynthesis of patulin, an acetate-derived tetraketide mycotoxin produced by several fungal species that shows antimicrobial properties against several bacteria. May be involved in the secretion of E-ascladiol to be converted to patulin by the secreted patulin synthase patE. In Aspergillus clavatus (strain ATCC 1007 / CBS 513.65 / DSM 816 / NCTC 3887 / NRRL 1 / QM 1276 / 107), this protein is Efflux pump patC.